The following is a 215-amino-acid chain: Protein-L-isoaspartate O-methyltransferase (215 aa).

Residue Ser62 is part of the active site.

Belongs to the methyltransferase superfamily. L-isoaspartyl/D-aspartyl protein methyltransferase family.

Its subcellular location is the cytoplasm. It carries out the reaction [protein]-L-isoaspartate + S-adenosyl-L-methionine = [protein]-L-isoaspartate alpha-methyl ester + S-adenosyl-L-homocysteine. Functionally, catalyzes the methyl esterification of L-isoaspartyl residues in peptides and proteins that result from spontaneous decomposition of normal L-aspartyl and L-asparaginyl residues. It plays a role in the repair and/or degradation of damaged proteins. The protein is Protein-L-isoaspartate O-methyltransferase of Nitratidesulfovibrio vulgaris (strain DSM 19637 / Miyazaki F) (Desulfovibrio vulgaris).